Consider the following 88-residue polypeptide: MALSTIVSQRKQIKRKAPRGFLKRVFKRKKPQLRLEKSGDLLVHLNCLLFVHRLAEESRTNACASKCRVINKEHVLAAAKVILKKSRG.

The protein belongs to the CENP-W/WIP1 family. Heterodimer with CENPT; this dimer coassembles with CENPS-CENPX heterodimers at centromeres to form the tetrameric CENP-T-W-S-X complex, which is a subcomplex of the large constitutive centromere-associated network (CCAN, also known as the interphase centromere complex or ICEN). Interacts with NPM1. In terms of tissue distribution, highly expressed in ovary, liver, lung and pancreas and to a lower extent in breast and gastrointestinal tract cancers; such as those of the colon, rectum and stomach. Overexpressed in high grade breast invasive tumors. Expressed in many cancer cell types.

The protein resides in the nucleus. It localises to the chromosome. It is found in the centromere. The protein localises to the kinetochore. Its subcellular location is the nucleus matrix. The protein resides in the nucleolus. Its function is as follows. Component of the CENPA-NAC (nucleosome-associated) complex, a complex that plays a central role in assembly of kinetochore proteins, mitotic progression and chromosome segregation. The CENPA-NAC complex recruits the CENPA-CAD (nucleosome distal) complex and may be involved in incorporation of newly synthesized CENPA into centromeres. Part of a nucleosome-associated complex that binds specifically to histone H3-containing nucleosomes at the centromere, as opposed to nucleosomes containing CENPA. Component of the heterotetrameric CENP-T-W-S-X complex that binds and supercoils DNA, and plays an important role in kinetochore assembly. CENPW has a fundamental role in kinetochore assembly and function. It is one of the inner kinetochore proteins, with most further proteins binding downstream. Required for normal chromosome organization and normal progress through mitosis. This Homo sapiens (Human) protein is Centromere protein W (CENPW).